We begin with the raw amino-acid sequence, 520 residues long: Protein root UVB sensitive 4 (520 aa).

2 helical membrane-spanning segments follow: residues 275–295 and 301–321; these read IQTV…NMLF and LQAC…LLGI.

This sequence belongs to the RUS1 family.

It is found in the membrane. This Arabidopsis thaliana (Mouse-ear cress) protein is Protein root UVB sensitive 4.